The following is a 237-amino-acid chain: 7-cyano-7-deazaguanine synthase (237 aa).

An ATP-binding site is contributed by 14–24 (FSGGQDSATCL). 4 residues coordinate Zn(2+): cysteine 202, cysteine 217, cysteine 220, and cysteine 223.

This sequence belongs to the QueC family. It depends on Zn(2+) as a cofactor.

It carries out the reaction 7-carboxy-7-deazaguanine + NH4(+) + ATP = 7-cyano-7-deazaguanine + ADP + phosphate + H2O + H(+). It functions in the pathway purine metabolism; 7-cyano-7-deazaguanine biosynthesis. Functionally, catalyzes the ATP-dependent conversion of 7-carboxy-7-deazaguanine (CDG) to 7-cyano-7-deazaguanine (preQ(0)). The chain is 7-cyano-7-deazaguanine synthase from Rhodopseudomonas palustris (strain ATCC BAA-98 / CGA009).